The sequence spans 184 residues: Large ribosomal subunit protein uL6 (184 aa).

Belongs to the universal ribosomal protein uL6 family. As to quaternary structure, part of the 50S ribosomal subunit.

Its function is as follows. This protein binds to the 23S rRNA, and is important in its secondary structure. It is located near the subunit interface in the base of the L7/L12 stalk, and near the tRNA binding site of the peptidyltransferase center. This chain is Large ribosomal subunit protein uL6, found in Cytophaga hutchinsonii (strain ATCC 33406 / DSM 1761 / CIP 103989 / NBRC 15051 / NCIMB 9469 / D465).